A 340-amino-acid chain; its full sequence is uncharacterized protein (340 aa).

The next 2 helical transmembrane spans lie at 162 to 182 (PLVP…VLAG) and 239 to 259 (FWIA…IVVP).

The protein resides in the cell membrane. This is an uncharacterized protein from Mycobacterium tuberculosis (strain CDC 1551 / Oshkosh).